A 522-amino-acid polypeptide reads, in one-letter code: Sensory neuron membrane protein 1 (522 aa).

The Cytoplasmic segment spans residues 1–11 (MKLPKHLKFAA). A helical membrane pass occupies residues 12–32 (GAGGAFLFGILFGWVMFPAIL). Residues 33–455 (KGQLKKEMAL…KFQLFYPKKA (423 aa)) are Extracellular-facing. Asparagine 67 and asparagine 229 each carry an N-linked (GlcNAc...) asparagine glycan. 3 disulfides stabilise this stretch: cysteine 268–cysteine 333, cysteine 297–cysteine 350, and cysteine 335–cysteine 339. A glycan (N-linked (GlcNAc...) asparagine) is linked at asparagine 438. The chain crosses the membrane as a helical span at residues 456-476 (VGVIKWLLVTFGGFGLIGCTI). At 477–522 (YHYKDRIMSFASSPGSAAVTKVKPEEVEQKDVSVIGQPQEPAKINM) the chain is on the cytoplasmic side.

This sequence belongs to the CD36 family.

The protein resides in the cell membrane. Plays an olfactory role that is not restricted to pheromone sensitivity. In Plutella xylostella (Diamondback moth), this protein is Sensory neuron membrane protein 1.